A 188-amino-acid polypeptide reads, in one-letter code: dCTP deaminase (188 aa).

Residues Lys-111–Arg-116, Thr-135–Glu-137, Gln-156, Tyr-170, and Gln-180 contribute to the dCTP site. Glu-137 serves as the catalytic Proton donor/acceptor.

The protein belongs to the dCTP deaminase family. In terms of assembly, homotrimer.

The enzyme catalyses dCTP + H2O + H(+) = dUTP + NH4(+). The protein operates within pyrimidine metabolism; dUMP biosynthesis; dUMP from dCTP (dUTP route): step 1/2. Catalyzes the deamination of dCTP to dUTP. The chain is dCTP deaminase from Janthinobacterium sp. (strain Marseille) (Minibacterium massiliensis).